The primary structure comprises 94 residues: Pyrimidine/purine nucleoside phosphorylase 2 (94 aa).

It belongs to the nucleoside phosphorylase PpnP family.

It catalyses the reaction a purine D-ribonucleoside + phosphate = a purine nucleobase + alpha-D-ribose 1-phosphate. The enzyme catalyses adenosine + phosphate = alpha-D-ribose 1-phosphate + adenine. The catalysed reaction is cytidine + phosphate = cytosine + alpha-D-ribose 1-phosphate. It carries out the reaction guanosine + phosphate = alpha-D-ribose 1-phosphate + guanine. It catalyses the reaction inosine + phosphate = alpha-D-ribose 1-phosphate + hypoxanthine. The enzyme catalyses thymidine + phosphate = 2-deoxy-alpha-D-ribose 1-phosphate + thymine. The catalysed reaction is uridine + phosphate = alpha-D-ribose 1-phosphate + uracil. It carries out the reaction xanthosine + phosphate = alpha-D-ribose 1-phosphate + xanthine. Catalyzes the phosphorolysis of diverse nucleosides, yielding D-ribose 1-phosphate and the respective free bases. Can use uridine, adenosine, guanosine, cytidine, thymidine, inosine and xanthosine as substrates. Also catalyzes the reverse reactions. The protein is Pyrimidine/purine nucleoside phosphorylase 2 of Psychrobacter arcticus (strain DSM 17307 / VKM B-2377 / 273-4).